We begin with the raw amino-acid sequence, 233 residues long: Demethylmenaquinone methyltransferase (233 aa).

S-adenosyl-L-methionine contacts are provided by residues threonine 58, aspartate 79, and 106–107; that span reads NA.

The protein belongs to the class I-like SAM-binding methyltransferase superfamily. MenG/UbiE family.

The catalysed reaction is a 2-demethylmenaquinol + S-adenosyl-L-methionine = a menaquinol + S-adenosyl-L-homocysteine + H(+). It functions in the pathway quinol/quinone metabolism; menaquinone biosynthesis; menaquinol from 1,4-dihydroxy-2-naphthoate: step 2/2. Methyltransferase required for the conversion of demethylmenaquinol (DMKH2) to menaquinol (MKH2). In Bacillus velezensis (strain DSM 23117 / BGSC 10A6 / LMG 26770 / FZB42) (Bacillus amyloliquefaciens subsp. plantarum), this protein is Demethylmenaquinone methyltransferase.